We begin with the raw amino-acid sequence, 375 residues long: Alanine racemase (375 aa).

Catalysis depends on K35, which acts as the Proton acceptor; specific for D-alanine. K35 carries the post-translational modification N6-(pyridoxal phosphate)lysine. A substrate-binding site is contributed by R133. Y261 serves as the catalytic Proton acceptor; specific for L-alanine. Substrate is bound at residue M309.

It belongs to the alanine racemase family. The cofactor is pyridoxal 5'-phosphate.

It carries out the reaction L-alanine = D-alanine. It participates in amino-acid biosynthesis; D-alanine biosynthesis; D-alanine from L-alanine: step 1/1. Catalyzes the interconversion of L-alanine and D-alanine. May also act on other amino acids. This is Alanine racemase (alr) from Syntrophobacter fumaroxidans (strain DSM 10017 / MPOB).